We begin with the raw amino-acid sequence, 470 residues long: Pancreatic lipase-related protein 2 (470 aa).

An N-terminal signal peptide occupies residues 1-18; it reads MMLFVWTTGLLLLATARG. Cysteines 22 and 28 form a disulfide. The tract at residues 94–106 is required for galactolipase activity; sequence IHGFIDNGEKDWL. Cysteine 110 and cysteine 121 are disulfide-bonded. The active-site Nucleophile is serine 172. The active-site Charge relay system is aspartate 196. The Ca(2+) site is built by glutamate 207, arginine 210, aspartate 212, and aspartate 215. Residues cysteine 257 and cysteine 281 are joined by a disulfide bond. The tract at residues 258–280 is required for galactolipase activity; sequence EKNIISTIVDVNGFLEGITSLAA. The active-site Charge relay system is histidine 283. Cystine bridges form between cysteine 305–cysteine 316 and cysteine 319–cysteine 324. 2 N-linked (GlcNAc...) asparagine glycosylation sites follow: asparagine 354 and asparagine 429. A PLAT domain is found at 358-470; it reads WRYKVSVTLS…EDVLQSLSPC (113 aa). A disulfide bond links cysteine 454 and cysteine 470.

Belongs to the AB hydrolase superfamily. Lipase family. As to expression, pancreas.

The protein resides in the secreted. Its subcellular location is the zymogen granule membrane. It localises to the cell projection. It is found in the neuron projection. It carries out the reaction a triacylglycerol + H2O = a diacylglycerol + a fatty acid + H(+). It catalyses the reaction a 1,2-diacyl-3-O-(beta-D-galactosyl)-sn-glycerol + 2 H2O = 3-beta-D-galactosyl-sn-glycerol + 2 a fatty acid + 2 H(+). The catalysed reaction is 1,2,3-tri-(9Z-octadecenoyl)-glycerol + H2O = di-(9Z)-octadecenoylglycerol + (9Z)-octadecenoate + H(+). The enzyme catalyses di-(9Z)-octadecenoylglycerol + H2O = (9Z-octadecenoyl)-glycerol + (9Z)-octadecenoate + H(+). It carries out the reaction (9Z-octadecenoyl)-glycerol + H2O = glycerol + (9Z)-octadecenoate + H(+). It catalyses the reaction 1-(9Z-octadecenoyl)-glycerol + H2O = glycerol + (9Z)-octadecenoate + H(+). The catalysed reaction is 1,2,3-tripropanoylglycerol + H2O = dipropanoylglycerol + propanoate + H(+). The enzyme catalyses 1,2,3-tributanoylglycerol + H2O = dibutanoylglycerol + butanoate + H(+). It carries out the reaction 1,2,3-trioctanoylglycerol + H2O = dioctanoylglycerol + octanoate + H(+). It catalyses the reaction 1,2-didecanoylglycerol + H2O = decanoylglycerol + decanoate + H(+). The catalysed reaction is long chain 1,2-diacyl-3-O-beta-D-galactosyl-sn-glycerol + H2O = long chain acyl-3-O-beta-D-galactosyl-sn-glycerol + a fatty acid + H(+). The enzyme catalyses 1,2-dioctanoyl-3-O-beta-D-galactosyl-sn-glycerol + H2O = octanoyl-3-(beta-D-galactosyl)-sn-glycerol + octanoate + H(+). It carries out the reaction 1,2-didodecanoyl-3-beta-D-galactosyl-sn-glycerol + H2O = dodecanoyl-3-beta-D-galactosyl-sn-glycerol + dodecanoate + H(+). It catalyses the reaction 1-beta-D-galactosyl-2,3-didodecanoyl-sn-glycerol + H2O = 1-beta-D-galactosyl-dodecanoyl-sn-glycerol + dodecanoate + H(+). The catalysed reaction is a 1,2-diacyl-3-O-[alpha-D-galactosyl-(1-&gt;6)-beta-D-galactosyl]-sn-glycerol + H2O = acyl-3-O-[alpha-D-galactosyl-(1-&gt;6)-beta-D-galactosyl]-sn-glycerol + a fatty acid + H(+). The enzyme catalyses long chain 1,2-diacyl-3-O-[alpha-D-galactosyl-(1-&gt;6)-beta-D-galactosyl]-sn-glycerol + H2O = long chain acyl-3-O-[alpha-D-galactosyl-(1-&gt;6)-beta-D-galactosyl]-sn-glycerol + a fatty acid + H(+). It carries out the reaction 1,2-dioctanoyl-3-O-[alpha-D-galactosyl-(1-&gt;6)-beta-D-galactosyl]-sn-glycerol + H2O = octanoyl-3-O-[alpha-D-galactosyl-(1-&gt;6)-beta-D-galactosyl]-sn-glycerol + octanoate + H(+). It catalyses the reaction 1,2-didodecanoyl-3-O-[alpha-D-galactosyl-(1-&gt;6)-beta-D-galactosyl]-sn-glycerol + H2O = dodecanoyl-3-O-[alpha-D-galactosyl-(1-&gt;6)-beta-D-galactosyl]-sn-glycerol + dodecanoate + H(+). The catalysed reaction is a 1,2-diacyl-sn-glycero-3-phosphocholine + H2O = a monoacyl-sn-glycero-3-phosphocholine + a fatty acid + H(+). Its pathway is glycerolipid metabolism; triacylglycerol degradation. It participates in glycolipid metabolism. Its activity is regulated as follows. Triacylglycerol lipase activity is inhibited by increasing bile salts concentrations and not reactivated by CLPS. In terms of biological role, lipase that primarily hydrolyzes triglycerides and galactosylglycerides. In neonates, may play a major role in pancreatic digestion of dietary fats such as milk fat globules enriched in long-chain triglycerides. Hydrolyzes short-, medium- and long-chain fatty acyls in triglycerides without apparent positional specificity. Can completely deacylate triacylglycerols. When the liver matures and bile salt synthesis increases, likely functions mainly as a galactolipase and monoacylglycerol lipase. Hydrolyzes monogalactosyldiglycerols (MGDG) and digalactosyldiacylglycerols (DGDG) present in a plant-based diet, releasing long-chain polyunsaturated fatty acids. Hydrolyzes medium- and long-chain fatty acyls in galactolipids. May act together with LIPF to hydrolyze partially digested triglycerides. Hydrolyzes long-chain monoglycerides with high efficiency. In cytotoxic T cells, contributes to perforin-dependent cell lysis, but is unlikely to mediate direct cytotoxicity. Also has low phospholipase activity. In neurons, required for the localization of the phospholipid 1-oleoyl-2-palmitoyl-PC (OPPC) to neurite tips through acyl chain remodeling of membrane phospholipids. The resulting OPPC-rich lipid membrane domain recruits the t-SNARE protein STX4 by selectively interacting with the STX4 transmembrane domain and this promotes surface expression of the dopamine transporter SLC6A3/DAT at neurite tips by facilitating fusion of SLC6A3-containing transport vesicles with the plasma membrane. This is Pancreatic lipase-related protein 2 from Myocastor coypus (Coypu).